A 314-amino-acid polypeptide reads, in one-letter code: 3'-5' exoribonuclease YhaM (314 aa).

Residues 22–90 (SSTKGIASNG…QLKLRNIRPV (69 aa)) constitute a DNA-binding region (OB). The HD domain maps to 163–279 (HVVSMLNLAK…LHYIDNLDAK (117 aa)).

Belongs to the YhaM family. Requires Mn(2+) as cofactor. Co(2+) serves as cofactor.

Functionally, shows a 3'-5' exoribonuclease activity as well as single-stranded DNA 3'-5'exonuclease activity. Plays a role in the secondary pathway of 23S rRNA 3' end maturation. This is 3'-5' exoribonuclease YhaM from Bacillus subtilis (strain 168).